We begin with the raw amino-acid sequence, 397 residues long: Pectate lyase (397 aa).

The first 25 residues, methionine 1 to alanine 25, serve as a signal peptide directing secretion. Asparagine 134 carries N-linked (GlcNAc...) asparagine glycosylation. 3 residues coordinate Ca(2+): aspartate 191, aspartate 216, and aspartate 220. N-linked (GlcNAc...) asparagine glycosylation occurs at asparagine 227. Arginine 272 is an active-site residue.

Belongs to the polysaccharide lyase 1 family. Ca(2+) serves as cofactor.

The enzyme catalyses Eliminative cleavage of (1-&gt;4)-alpha-D-galacturonan to give oligosaccharides with 4-deoxy-alpha-D-galact-4-enuronosyl groups at their non-reducing ends.. It participates in glycan metabolism; pectin degradation; 2-dehydro-3-deoxy-D-gluconate from pectin: step 2/5. This is Pectate lyase from Nicotiana tabacum (Common tobacco).